Consider the following 209-residue polypeptide: Nascent polypeptide-associated complex subunit alpha (209 aa).

Residues 1–21 (MSNPRVEELPDEEPKKTTVQE) are compositionally biased toward basic and acidic residues. 2 disordered regions span residues 1 to 51 (MSNP…HNRN) and 121 to 175 (QLAS…DKDI). Over residues 22–36 (HEDDSSDDSEVEEVG) the composition is skewed to acidic residues. The region spanning 49 to 114 (NRNEKKARKA…AKIEDVNAAA (66 aa)) is the NAC-A/B domain. Basic and acidic residues predominate over residues 127–150 (AEDHSGHNHGEPSKAVEADEKKED). Acidic residues predominate over residues 151-166 (KEDDEDEEEEEEEEVD). Positions 170–209 (LEDKDIELVMTQANVSRNKAVKALKENDNDIVNSIMALSI) constitute a UBA domain.

This sequence belongs to the NAC-alpha family. In terms of assembly, part of the nascent polypeptide-associated complex (NAC), consisting of EGD2 and EGD1. NAC associates with ribosomes via EGD1.

Its subcellular location is the cytoplasm. The protein localises to the nucleus. Component of the nascent polypeptide-associated complex (NAC), a dynamic component of the ribosomal exit tunnel, protecting the emerging polypeptides from interaction with other cytoplasmic proteins to ensure appropriate nascent protein targeting. The NAC complex also promotes mitochondrial protein import by enhancing productive ribosome interactions with the outer mitochondrial membrane and blocks the inappropriate interaction of ribosomes translating non-secretory nascent polypeptides with translocation sites in the membrane of the endoplasmic reticulum. EGD2 may also be involved in transcription regulation. The polypeptide is Nascent polypeptide-associated complex subunit alpha (EGD2) (Gibberella zeae (strain ATCC MYA-4620 / CBS 123657 / FGSC 9075 / NRRL 31084 / PH-1) (Wheat head blight fungus)).